Reading from the N-terminus, the 75-residue chain is Translation initiation factor IF-1, chloroplastic (75 aa).

One can recognise an S1-like domain in the interval Met-1–Ser-72.

Belongs to the IF-1 family. Component of the 30S ribosomal translation pre-initiation complex which assembles on the 30S ribosome in the order IF-2 and IF-3, IF-1 and N-formylmethionyl-tRNA(fMet); mRNA recruitment can occur at any time during PIC assembly.

The protein resides in the plastid. It is found in the chloroplast. Its function is as follows. One of the essential components for the initiation of protein synthesis. Stabilizes the binding of IF-2 and IF-3 on the 30S subunit to which N-formylmethionyl-tRNA(fMet) subsequently binds. Helps modulate mRNA selection, yielding the 30S pre-initiation complex (PIC). Upon addition of the 50S ribosomal subunit IF-1, IF-2 and IF-3 are released leaving the mature 70S translation initiation complex. The sequence is that of Translation initiation factor IF-1, chloroplastic from Pinus koraiensis (Korean pine).